A 721-amino-acid polypeptide reads, in one-letter code: S-adenosyl-L-methionine-dependent tRNA 4-demethylwyosine synthase TYW1 (721 aa).

The 159-residue stretch at 71–229 (VKIFYGSQTG…DFTAWKTKFI (159 aa)) folds into the Flavodoxin-like domain. FMN-binding positions include 77–81 (SQTGT) and 168–200 (VFGL…QRVL). Disordered stretches follow at residues 242–291 (ACGG…ELGT) and 305–339 (DLGN…TEDG). A compositionally biased stretch (basic and acidic residues) spans 250-274 (GKCESAQHGPGEARPHPQGELHPGD). Positions 275–290 (AEEEEPCESSSEDELG) are enriched in acidic residues. Basic and acidic residues predominate over residues 313–325 (VKREKREKSHQDG). Residues 389–635 (YGIESHRCME…LLPDYEVACE (247 aa)) form the Radical SAM core domain. Residues C405, C409, and C412 each coordinate [4Fe-4S] cluster.

It belongs to the TYW1 family. It depends on [4Fe-4S] cluster as a cofactor.

It catalyses the reaction N(1)-methylguanosine(37) in tRNA(Phe) + pyruvate + S-adenosyl-L-methionine = 4-demethylwyosine(37) in tRNA(Phe) + 5'-deoxyadenosine + L-methionine + CO2 + H2O. Its pathway is tRNA modification; wybutosine-tRNA(Phe) biosynthesis. Its function is as follows. Probable component of the wybutosine biosynthesis pathway. Wybutosine is a hyper modified guanosine with a tricyclic base found at the 3'-position adjacent to the anticodon of eukaryotic phenylalanine tRNA. Catalyzes the condensation of N-methylguanine with 2 carbon atoms from pyruvate to form the tricyclic 4-demethylwyosine, an intermediate in wybutosine biosynthesis. In Mus musculus (Mouse), this protein is S-adenosyl-L-methionine-dependent tRNA 4-demethylwyosine synthase TYW1 (Tyw1).